The following is a 231-amino-acid chain: Large ribosomal subunit protein uL3 (231 aa).

Gln-151 bears the N5-methylglutamine mark.

It belongs to the universal ribosomal protein uL3 family. As to quaternary structure, part of the 50S ribosomal subunit. Forms a cluster with proteins L14 and L19. Methylated by PrmB.

Functionally, one of the primary rRNA binding proteins, it binds directly near the 3'-end of the 23S rRNA, where it nucleates assembly of the 50S subunit. The protein is Large ribosomal subunit protein uL3 of Granulibacter bethesdensis (strain ATCC BAA-1260 / CGDNIH1).